The following is a 341-amino-acid chain: tRNA N6-adenosine threonylcarbamoyltransferase (341 aa).

Positions 111 and 115 each coordinate Fe cation. Residues 134–138 (LVSGG), Asp-167, Gly-180, and Asn-276 each bind substrate. Asp-304 is a binding site for Fe cation.

It belongs to the KAE1 / TsaD family. It depends on Fe(2+) as a cofactor.

Its subcellular location is the cytoplasm. It catalyses the reaction L-threonylcarbamoyladenylate + adenosine(37) in tRNA = N(6)-L-threonylcarbamoyladenosine(37) in tRNA + AMP + H(+). Functionally, required for the formation of a threonylcarbamoyl group on adenosine at position 37 (t(6)A37) in tRNAs that read codons beginning with adenine. Is involved in the transfer of the threonylcarbamoyl moiety of threonylcarbamoyl-AMP (TC-AMP) to the N6 group of A37, together with TsaE and TsaB. TsaD likely plays a direct catalytic role in this reaction. The sequence is that of tRNA N6-adenosine threonylcarbamoyltransferase from Pseudomonas aeruginosa (strain UCBPP-PA14).